The chain runs to 427 residues: Trigger factor (427 aa).

The region spanning 163-248 (GDTVILDFEG…LHEIKTKEVP (86 aa)) is the PPIase FKBP-type domain.

This sequence belongs to the FKBP-type PPIase family. Tig subfamily.

Its subcellular location is the cytoplasm. The catalysed reaction is [protein]-peptidylproline (omega=180) = [protein]-peptidylproline (omega=0). Involved in protein export. Acts as a chaperone by maintaining the newly synthesized protein in an open conformation. Functions as a peptidyl-prolyl cis-trans isomerase. This is Trigger factor from Listeria monocytogenes serotype 4b (strain CLIP80459).